A 225-amino-acid polypeptide reads, in one-letter code: Protein E26 (225 aa).

Interacts with proteins IE0 and IE1. Interacts with protein FP25K. Interacts with host importin alpha-16. Post-translationally, palmitoylated.

It is found in the host nucleus inner membrane. Its subcellular location is the virion. The protein localises to the host cytoplasm. The protein resides in the host nucleus. Functionally, plays a role in the sorting of ODV envelope proteins to the host inner nuclear membrane. May facilitate the fusion and release of nucleocapsids into the cytoplasm. Modulates the expression levels of IE0 and IE1. The sequence is that of Protein E26 (DA26) from Lepidoptera (butterflies and moths).